Reading from the N-terminus, the 423-residue chain is Zinc transporter ZIP13 (423 aa).

Topologically, residues 1-15 (MPGCPCPGIGMAGQR) are lumenal. The helical transmembrane segment at 16 to 36 (LLFLAALALELLGGAGGSQQA) threads the bilayer. Topologically, residues 37 to 68 (LRSRGVAAACRLDSKESESWGALLSGERLETW) are cytoplasmic. The helical transmembrane segment at 69-89 (ICSLLGSLMVGLSGVFPLLVI) threads the bilayer. Residues 90 to 108 (PLEMGTTLRSEAGARRLKQ) are Lumenal-facing. The helical transmembrane segment at 109-129 (LLSFALGGLLGNVFLHLLPEA) threads the bilayer. Residues 130–149 (WAYTNSASSGGERQSLQQQQ) lie on the Cytoplasmic side of the membrane. A helical membrane pass occupies residues 150–170 (QLGLWVIAGFLTFLVLEKLFF). At 171–235 (DSKGKEETSQ…TIDNFTHGLA (65 aa)) the chain is on the lumenal side. Residues 236 to 256 (VAASFLVSKKIGLLTTMAILL) traverse the membrane as a helical segment. Residues 257–262 (HEIPHE) carry the XEXPHE-motif motif. Over 257–278 (HEIPHEVGDFAILLRAGFDRWS) the chain is Cytoplasmic. A helical transmembrane segment spans residues 279 to 299 (AAKLQLSTALGGLLGACFAIC). At 300–368 (AQSPKGVGTG…RAPPPATEET (69 aa)) the chain is on the lumenal side. A helical transmembrane segment spans residues 369–389 (VAWILPFTSGGFLYIALVNVL). Residues 390 to 401 (PDLLEEDDPWRS) are Cytoplasmic-facing. Residues 402–422 (LQQVLLLCAGIVVMVLFSVFV) traverse the membrane as a helical segment. Position 423 (E423) is a topological domain, lumenal.

It belongs to the ZIP transporter (TC 2.A.5) family. In terms of assembly, homodimer.

The protein localises to the golgi apparatus membrane. It localises to the cytoplasmic vesicle membrane. Its subcellular location is the endoplasmic reticulum membrane. The enzyme catalyses Zn(2+)(in) = Zn(2+)(out). Its function is as follows. Functions as a zinc transporter transporting Zn(2+) from the Golgi apparatus to the cytosol and thus influences the zinc level at least in areas of the cytosol. May regulate beige adipocyte differentiation. The protein is Zinc transporter ZIP13 of Bos taurus (Bovine).